Reading from the N-terminus, the 132-residue chain is ATP synthase epsilon chain (132 aa).

This sequence belongs to the ATPase epsilon chain family. In terms of assembly, F-type ATPases have 2 components, CF(1) - the catalytic core - and CF(0) - the membrane proton channel. CF(1) has five subunits: alpha(3), beta(3), gamma(1), delta(1), epsilon(1). CF(0) has three main subunits: a, b and c.

It localises to the cell inner membrane. Produces ATP from ADP in the presence of a proton gradient across the membrane. The protein is ATP synthase epsilon chain of Anaeromyxobacter dehalogenans (strain 2CP-C).